Here is a 181-residue protein sequence, read N- to C-terminus: uncharacterized protein (181 aa).

A Nudix hydrolase domain is found at 35–175 (LRHRCVFVWA…ARLRAWRGAS (141 aa)). The Nudix box signature appears at 72 to 94 (GGVVGAGESYDDAALREAEEELG). Glu-88 and Glu-92 together coordinate Mg(2+).

The protein belongs to the Nudix hydrolase family. It depends on Mg(2+) as a cofactor.

This is an uncharacterized protein from Streptomyces coelicolor (strain ATCC BAA-471 / A3(2) / M145).